Reading from the N-terminus, the 579-residue chain is V-type ATP synthase alpha chain (579 aa).

Gly-227 to Thr-234 provides a ligand contact to ATP.

The protein belongs to the ATPase alpha/beta chains family.

The catalysed reaction is ATP + H2O + 4 H(+)(in) = ADP + phosphate + 5 H(+)(out). In terms of biological role, produces ATP from ADP in the presence of a proton gradient across the membrane. The V-type alpha chain is a catalytic subunit. The chain is V-type ATP synthase alpha chain from Anaeromyxobacter dehalogenans (strain 2CP-1 / ATCC BAA-258).